The primary structure comprises 307 residues: Ventral anterior homeobox 2 (307 aa).

Disordered stretches follow at residues 1-70 (MFDQ…DKLL), 155-175 (RTKQ…STSE), and 197-254 (PPPN…PSPR). Basic and acidic residues predominate over residues 25–38 (CRDRGRESKSRTEV). Low complexity predominate over residues 46-62 (SSTDTPGTSASTPTSSS). A DNA-binding region (homeobox) is located at residues 103 to 162 (PKRTRTSFTAEQLYRLELEFQRCQYVVGRERTELARQLNLSETQVKVWFQNRRTKQKKDQ). Residues 159 to 170 (KKDQTKDTDKRS) show a composition bias toward basic and acidic residues. Over residues 202 to 249 (LLAHPHPGNGSLLGSPSVSTSSGVSSSTTPPGAGSGTFGLSLSSLSGT) the composition is skewed to low complexity.

The protein belongs to the EMX homeobox family. Expressed in the anterior neural keel and later in the preoptic area, optic stalk and ventral retina.

The protein resides in the nucleus. In terms of biological role, transcription factor that may function in dorsoventral specification of the forebrain. Required for closure of the choroid fissure and together with vax1 is required for optic nerve differentiation and to limit retinal development to the optic cup. The chain is Ventral anterior homeobox 2 (vax2) from Danio rerio (Zebrafish).